Reading from the N-terminus, the 329-residue chain is Ribosomal RNA small subunit methyltransferase H (329 aa).

Residues 46–48 (GGH), Asp65, Phe92, Asp113, and His120 contribute to the S-adenosyl-L-methionine site. Residues 295-329 (RGAERPSPAEVAANPRAASARLRAAEKIRDTREAA) form a disordered region. Positions 317-329 (RAAEKIRDTREAA) are enriched in basic and acidic residues.

This sequence belongs to the methyltransferase superfamily. RsmH family.

It is found in the cytoplasm. It carries out the reaction cytidine(1402) in 16S rRNA + S-adenosyl-L-methionine = N(4)-methylcytidine(1402) in 16S rRNA + S-adenosyl-L-homocysteine + H(+). In terms of biological role, specifically methylates the N4 position of cytidine in position 1402 (C1402) of 16S rRNA. This Acidothermus cellulolyticus (strain ATCC 43068 / DSM 8971 / 11B) protein is Ribosomal RNA small subunit methyltransferase H.